The following is a 409-amino-acid chain: tRNA (guanine-N(7)-)-methyltransferase non-catalytic subunit wuho (409 aa).

The interval 48 to 72 (DADSDSDEESTQQPQKPPTNGNGTA) is disordered. Residues 58–72 (TQQPQKPPTNGNGTA) are compositionally biased toward polar residues. WD repeat units lie at residues 72–111 (ADNV…DETN), 122–161 (MVSR…CKKP), 167–206 (GHMS…SIET), and 210–252 (GHGE…EVAR).

Belongs to the WD repeat TRM82 family. In terms of assembly, forms a heterodimer with the catalytic subunit.

It is found in the nucleus. The protein operates within tRNA modification; N(7)-methylguanine-tRNA biosynthesis. Required for the formation of N(7)-methylguanine at position 46 (m7G46) in tRNA. In the complex, it is required to stabilize and induce conformational changes of the catalytic subunit. This is tRNA (guanine-N(7)-)-methyltransferase non-catalytic subunit wuho from Aedes aegypti (Yellowfever mosquito).